Here is a 153-residue protein sequence, read N- to C-terminus: Putative adenylate kinase (153 aa).

ATP-binding residues include Gly12, Gly14, Lys15, Ser16, and Thr17. The tract at residues 31–47 (EGNELAKEYGCLFDEEV) is NMP. Residues 94–104 (ARGYSEEKIQE) form an LID region. Arg95 lines the ATP pocket.

This sequence belongs to the adenylate kinase family. AK6 subfamily. In terms of assembly, interacts with uS11. Not a structural component of 40S pre-ribosomes, but transiently interacts with them by binding to uS11.

It catalyses the reaction AMP + ATP = 2 ADP. The enzyme catalyses ATP + H2O = ADP + phosphate + H(+). Its function is as follows. Broad-specificity nucleoside monophosphate (NMP) kinase that catalyzes the reversible transfer of the terminal phosphate group between nucleoside triphosphates and monophosphates. Also has ATPase activity. Involved in the late maturation steps of the 30S ribosomal particles, specifically 16S rRNA maturation. While NMP activity is not required for ribosome maturation, ATPase activity is. Associates transiently with small ribosomal subunit protein uS11. ATP hydrolysis breaks the interaction with uS11. May temporarily remove uS11 from the ribosome to enable a conformational change of the ribosomal RNA that is needed for the final maturation step of the small ribosomal subunit. This Thermoplasma volcanium (strain ATCC 51530 / DSM 4299 / JCM 9571 / NBRC 15438 / GSS1) protein is Putative adenylate kinase.